Here is a 125-residue protein sequence, read N- to C-terminus: Small ribosomal subunit protein uS12 (125 aa).

Residue Asp-89 is modified to 3-methylthioaspartic acid. Positions 104–125 (LQGVKDRKQSRSKYGSKRPKKA) are disordered. Residues 113-125 (SRSKYGSKRPKKA) are compositionally biased toward basic residues.

This sequence belongs to the universal ribosomal protein uS12 family. As to quaternary structure, part of the 30S ribosomal subunit. Contacts proteins S8 and S17. May interact with IF1 in the 30S initiation complex.

In terms of biological role, with S4 and S5 plays an important role in translational accuracy. Functionally, interacts with and stabilizes bases of the 16S rRNA that are involved in tRNA selection in the A site and with the mRNA backbone. Located at the interface of the 30S and 50S subunits, it traverses the body of the 30S subunit contacting proteins on the other side and probably holding the rRNA structure together. The combined cluster of proteins S8, S12 and S17 appears to hold together the shoulder and platform of the 30S subunit. The protein is Small ribosomal subunit protein uS12 of Leptothrix cholodnii (strain ATCC 51168 / LMG 8142 / SP-6) (Leptothrix discophora (strain SP-6)).